The primary structure comprises 124 residues: Small ribosomal subunit protein uS12 (124 aa).

A disordered region spans residues 1–42; sequence MPTIQQLVRKGRRPKVNKTKSPALRGNPQQRGVCSRVYTTTP. Residues 9 to 18 show a composition bias toward basic residues; sequence RKGRRPKVNK. Polar residues predominate over residues 27 to 42; the sequence is NPQQRGVCSRVYTTTP. 3-methylthioaspartic acid is present on Asp-89.

The protein belongs to the universal ribosomal protein uS12 family. As to quaternary structure, part of the 30S ribosomal subunit. Contacts proteins S8 and S17. May interact with IF1 in the 30S initiation complex.

Its function is as follows. With S4 and S5 plays an important role in translational accuracy. In terms of biological role, interacts with and stabilizes bases of the 16S rRNA that are involved in tRNA selection in the A site and with the mRNA backbone. Located at the interface of the 30S and 50S subunits, it traverses the body of the 30S subunit contacting proteins on the other side and probably holding the rRNA structure together. The combined cluster of proteins S8, S12 and S17 appears to hold together the shoulder and platform of the 30S subunit. This Tropheryma whipplei (strain TW08/27) (Whipple's bacillus) protein is Small ribosomal subunit protein uS12.